Here is a 575-residue protein sequence, read N- to C-terminus: Alpha-(1,6)-fucosyltransferase (575 aa).

Residues 1-9 (MRPWTGSWR) lie on the Cytoplasmic side of the membrane. The helical; Signal-anchor for type II membrane protein transmembrane segment at 10-30 (WIMLILFAWGTLLFYIGGHLV) threads the bilayer. The Lumenal segment spans residues 31-575 (RDNDHSDHSS…KYPTYPEADK (545 aa)). 3 disulfide bridges follow: cysteine 204-cysteine 266, cysteine 212-cysteine 230, and cysteine 218-cysteine 222. The GT23 domain occupies 206–493 (KAKKLVCNIN…PDASANFRSL (288 aa)). Position 278 is a phosphoserine (serine 278). The short motif at 299-305 (PRPPYLP) is the SH3-binding element. The interval 365–366 (RR) is important for donor substrate binding. A disulfide bond links cysteine 465 and cysteine 472. In terms of domain architecture, SH3 spans 502–563 (PNAHNQIAIY…PSYKVREKIE (62 aa)).

The protein belongs to the glycosyltransferase 23 family. In terms of processing, tyrosine phosphorylated by PKDCC/VLK. In terms of tissue distribution, highest expression in brain.

It localises to the golgi apparatus. Its subcellular location is the golgi stack membrane. The enzyme catalyses N(4)-{beta-D-GlcNAc-(1-&gt;2)-alpha-D-Man-(1-&gt;3)-[beta-D-GlcNAc-(1-&gt;2)-alpha-D-Man-(1-&gt;6)]-beta-D-Man-(1-&gt;4)-beta-D-GlcNAc-(1-&gt;4)-beta-D-GlcNAc}-L-asparaginyl-[protein] + GDP-beta-L-fucose = an N(4)-{beta-D-GlcNAc-(1-&gt;2)-alpha-D-Man-(1-&gt;3)-[beta-D-GlcNAc-(1-&gt;2)-alpha-D-Man-(1-&gt;6)]-beta-D-Man-(1-&gt;4)-beta-D-GlcNAc-(1-&gt;4)-[alpha-L-Fuc-(1-&gt;6)]-beta-D-GlcNAc}-L-asparaginyl-[protein] + GDP + H(+). It functions in the pathway protein modification; protein glycosylation. Catalyzes the addition of fucose in alpha 1-6 linkage to the first GlcNAc residue, next to the peptide chains in N-glycans. In Sus scrofa (Pig), this protein is Alpha-(1,6)-fucosyltransferase (FUT8).